Here is a 381-residue protein sequence, read N- to C-terminus: Alkanesulfonate monooxygenase (381 aa).

This sequence belongs to the SsuD family. Homotetramer.

It carries out the reaction an alkanesulfonate + FMNH2 + O2 = an aldehyde + FMN + sulfite + H2O + 2 H(+). Its function is as follows. Catalyzes the desulfonation of aliphatic sulfonates. This chain is Alkanesulfonate monooxygenase, found in Escherichia fergusonii (strain ATCC 35469 / DSM 13698 / CCUG 18766 / IAM 14443 / JCM 21226 / LMG 7866 / NBRC 102419 / NCTC 12128 / CDC 0568-73).